The following is a 210-amino-acid chain: MSAPHWLSQGTLVLASNNKGKITEFEKLFAELQLPVDVIPQGQLNIPDAIEDGLSFVENAIIKARHASKISGKPAIADDSGICVPVLGGAPGIYSARYAGDHGNDAANNEKLLHDLKPFRNAEQAIQGMFVCVLALVEHAEDPLPQIFQGFWHGEILEQARGEHGFGYDPLFWLSELKMSSAEMSKEEKNKISHRGQAMQRFRESLMTRE.

16–21 provides a ligand contact to substrate; sequence SNNKGK. Asp-79 serves as the catalytic Proton acceptor. Asp-79 serves as a coordination point for Mg(2+). Residues Ser-80, 166–169, Lys-189, and 194–195 each bind substrate; these read FGYD and HR.

It belongs to the HAM1 NTPase family. Homodimer. It depends on Mg(2+) as a cofactor.

It carries out the reaction XTP + H2O = XMP + diphosphate + H(+). The catalysed reaction is dITP + H2O = dIMP + diphosphate + H(+). It catalyses the reaction ITP + H2O = IMP + diphosphate + H(+). Pyrophosphatase that catalyzes the hydrolysis of nucleoside triphosphates to their monophosphate derivatives, with a high preference for the non-canonical purine nucleotides XTP (xanthosine triphosphate), dITP (deoxyinosine triphosphate) and ITP. Seems to function as a house-cleaning enzyme that removes non-canonical purine nucleotides from the nucleotide pool, thus preventing their incorporation into DNA/RNA and avoiding chromosomal lesions. The protein is dITP/XTP pyrophosphatase of Acinetobacter baylyi (strain ATCC 33305 / BD413 / ADP1).